The chain runs to 147 residues: Small ribosomal subunit protein uS5 (147 aa).

Residues 9 to 72 (FEEVIVDIGR…DDAFKNIVEV (64 aa)) enclose the S5 DRBM domain.

It belongs to the universal ribosomal protein uS5 family. As to quaternary structure, part of the 30S ribosomal subunit. Contacts proteins S4 and S8.

Functionally, with S4 and S12 plays an important role in translational accuracy. Its function is as follows. Located at the back of the 30S subunit body where it stabilizes the conformation of the head with respect to the body. This is Small ribosomal subunit protein uS5 from Campylobacter jejuni subsp. jejuni serotype O:6 (strain 81116 / NCTC 11828).